The chain runs to 534 residues: Prolyl 4-hydroxylase subunit alpha-2 (534 aa).

A signal peptide spans 1–21; that stretch reads MKPWLCLVFFTSAFLIWHAEA. A glycan (N-linked (GlcNAc...) asparagine) is linked at Asn-115. A TPR repeat occupies 207 to 240; sequence VEILDYLSYAVFQFGDLHRAMELTRRLISLDSTH. N-linked (GlcNAc...) asparagine glycosylation occurs at Asn-263. The 107-residue stretch at 413–519 folds into the Fe2OG dioxygenase domain; it reads TAELLQVANY…KWVSNKWFHE (107 aa). Fe cation-binding residues include His-431, Asp-433, and His-500. Residue Lys-510 participates in 2-oxoglutarate binding.

Belongs to the P4HA family. As to quaternary structure, heterotetramer of two alpha-2 chains and two beta chains (the beta chain is the multi-functional PDI). Requires Fe(2+) as cofactor. It depends on L-ascorbate as a cofactor.

The protein localises to the endoplasmic reticulum lumen. It carries out the reaction L-prolyl-[collagen] + 2-oxoglutarate + O2 = trans-4-hydroxy-L-prolyl-[collagen] + succinate + CO2. In terms of biological role, catalyzes the post-translational formation of 4-hydroxyproline in -Xaa-Pro-Gly- sequences in collagens and other proteins. This chain is Prolyl 4-hydroxylase subunit alpha-2 (P4HA2), found in Gallus gallus (Chicken).